The chain runs to 414 residues: F-box protein At3g26010 (414 aa).

One can recognise an F-box domain in the interval 5–52 (NRTIHLTDAIWTEILARLPLRIIARFKSVSKTWKSTIESVYFRRLFVS).

The polypeptide is F-box protein At3g26010 (Arabidopsis thaliana (Mouse-ear cress)).